A 120-amino-acid polypeptide reads, in one-letter code: NAD(P)H-quinone oxidoreductase subunit 3, chloroplastic (120 aa).

Helical transmembrane passes span 9-29 (IFWA…LISG), 64-84 (MFAL…PWAM), and 88-108 (VLGV…ILGL).

This sequence belongs to the complex I subunit 3 family. As to quaternary structure, NDH is composed of at least 16 different subunits, 5 of which are encoded in the nucleus.

Its subcellular location is the plastid. It localises to the chloroplast thylakoid membrane. The enzyme catalyses a plastoquinone + NADH + (n+1) H(+)(in) = a plastoquinol + NAD(+) + n H(+)(out). It catalyses the reaction a plastoquinone + NADPH + (n+1) H(+)(in) = a plastoquinol + NADP(+) + n H(+)(out). Functionally, NDH shuttles electrons from NAD(P)H:plastoquinone, via FMN and iron-sulfur (Fe-S) centers, to quinones in the photosynthetic chain and possibly in a chloroplast respiratory chain. The immediate electron acceptor for the enzyme in this species is believed to be plastoquinone. Couples the redox reaction to proton translocation, and thus conserves the redox energy in a proton gradient. This Capsella bursa-pastoris (Shepherd's purse) protein is NAD(P)H-quinone oxidoreductase subunit 3, chloroplastic.